We begin with the raw amino-acid sequence, 95 residues long: Small ribosomal subunit protein bS18 (95 aa).

This sequence belongs to the bacterial ribosomal protein bS18 family. Part of the 30S ribosomal subunit. Forms a tight heterodimer with protein bS6.

In terms of biological role, binds as a heterodimer with protein bS6 to the central domain of the 16S rRNA, where it helps stabilize the platform of the 30S subunit. The polypeptide is Small ribosomal subunit protein bS18 (Rickettsia rickettsii (strain Sheila Smith)).